Consider the following 513-residue polypeptide: Autophagy-related protein 18 (513 aa).

A WD 1 repeat occupies 2–40 (SDLPIINFINFNQNGTCISIGTSQGFKIFNCEPFGRFYQ). Residues 167 to 225 (NNINIKKSDAAEDPLRKDHFAYDPSDHSHPQSTTESTSNNHNRTYSSGNNNNTNSNPNK) are disordered. Positions 172-195 (KKSDAAEDPLRKDHFAYDPSDHSH) are enriched in basic and acidic residues. Low complexity predominate over residues 205–225 (NNHNRTYSSGNNNNTNSNPNK). The WD 2 repeat unit spans residues 248–288 (AHKGEIAALKLSADGTLLATASEKGTIIRVFNVENGSKVYQ). The necessary for proper localization to vacuole membrane stretch occupies residues 289–292 (FRRG). The L/FRRG motif signature appears at 289–293 (FRRGT). A WD 3 repeat occupies 293 to 332 (TYSTKISSLSFSKDNQFLAVCSSSKTVHIFKLGEKIIDNT). The segment at 333-398 (KPNELNSDDD…TVGRMIRKSS (66 aa)) is disordered. The segment covering 338-369 (NSDDDMDDDLLPQFENGDDEEEVDEETLDEEA) has biased composition (acidic residues).

Belongs to the WD repeat PROPPIN family. In terms of assembly, component of the PI(3,5)P2 regulatory complex. Interacts with ATG2 and ATG9. The ATG2-ATG18 complex is essential for autophagosome formation.

It is found in the preautophagosomal structure membrane. It localises to the vacuole membrane. The protein localises to the endosome membrane. Its function is as follows. Component of the PI(3,5)P2 regulatory complex that regulates both the synthesis and turnover of phosphatidylinositol 3,5-bisphosphate (PtdIns(3,5)P2). Plays an important role in osmotically-induced vacuole fragmentation. Required for cytoplasm to vacuole transport (Cvt) vesicle formation, pexophagy and starvation-induced autophagy. Involved in correct ATG9 trafficking to the pre-autophagosomal structure. With ATG2, protects ATG8 from ATG4-mediated cleavage. This chain is Autophagy-related protein 18, found in Kluyveromyces marxianus (strain DMKU3-1042 / BCC 29191 / NBRC 104275) (Yeast).